The sequence spans 74 residues: uncharacterized protein (74 aa).

A helical membrane pass occupies residues 15 to 32 (FLHALTVTFLSDIFVWLV).

It localises to the membrane. This is an uncharacterized protein from Saccharomyces cerevisiae (strain ATCC 204508 / S288c) (Baker's yeast).